We begin with the raw amino-acid sequence, 544 residues long: BTB/POZ domain-containing protein At2g13690 (544 aa).

Disordered stretches follow at residues 34–66 (ASPDTRSISSRNHIPAKSQQQRPKLVPCSPQSS) and 82–111 (LSPGRVSPIDSDPTVTTMQETETTQEEEDD). The span at 37–55 (DTRSISSRNHIPAKSQQQR) shows a compositional bias: polar residues. Residues 93–103 (DPTVTTMQETE) are compositionally biased toward low complexity. The region spanning 142–225 (YDARLSLKGR…MFEESNVIIK (84 aa)) is the BTB domain.

Its pathway is protein modification; protein ubiquitination. Its function is as follows. May act as a substrate-specific adapter of an E3 ubiquitin-protein ligase complex (CUL3-RBX1-BTB) which mediates the ubiquitination and subsequent proteasomal degradation of target proteins. The polypeptide is BTB/POZ domain-containing protein At2g13690 (PRL1-IFG) (Arabidopsis thaliana (Mouse-ear cress)).